A 234-amino-acid polypeptide reads, in one-letter code: Endo-1,4-beta-xylanase 1 (234 aa).

Positions 1-21 are cleaved as a signal peptide; sequence MVSFIFTRIILFAAAINGAVA. N-linked (GlcNAc...) asparagine glycosylation is found at N25 and N75. A GH11 domain is found at 38-234; the sequence is SGTPSSTGYS…SSGFSSITVA (197 aa). E124 acts as the Nucleophile in catalysis. N167 is a glycosylation site (N-linked (GlcNAc...) asparagine). The Proton donor role is filled by E221.

The protein belongs to the glycosyl hydrolase 11 (cellulase G) family.

The protein localises to the secreted. It catalyses the reaction Endohydrolysis of (1-&gt;4)-beta-D-xylosidic linkages in xylans.. Its pathway is glycan degradation; xylan degradation. Its function is as follows. Endo-1,4-beta-xylanase involved in the hydrolysis of xylan, a major structural heterogeneous polysaccharide found in plant biomass representing the second most abundant polysaccharide in the biosphere, after cellulose. The chain is Endo-1,4-beta-xylanase 1 (Xyn1) from Leucoagaricus gongylophorus (Leaf-cutting ant fungus).